Consider the following 1062-residue polypeptide: NACHT, LRR and PYD domains-containing protein 2 (1062 aa).

Positions 1–94 (MVSSAQMGFN…SERAKDEVRE (94 aa)) constitute a Pyrin domain. The NACHT domain occupies 207–526 (YTVVLYGPAG…LEKEEEEDRD (320 aa)). 213-220 (GPAGLGKT) serves as a coordination point for ATP. Phosphoserine is present on serine 671. LRR repeat units follow at residues 812 to 832 (SLTC…KLLY), 841 to 861 (FLQR…KDLA), 869 to 889 (ELTH…KFLC), 898 to 918 (KLQT…CDLT), 926 to 946 (SLLC…KFLC), 955 to 976 (NLRC…DLCS), 983 to 1003 (SLVT…KMLF), and 1010 to 1033 (SGTL…LLEE).

Belongs to the NLRP family. In terms of assembly, interacts with CHUK. Interacts with IKBKB. Interacts with IKBKG. Interacts with MEFV. Interacts with PYCARD. Interacts (via pyrin domain) with PYDC2. Interacts with CARD8. In terms of tissue distribution, expressed at high levels in lung, placenta and thymus and at lower levels in ovary, intestine and brain. Highly abundant in oocytes and early embryos, however poorly expressed in somatic tissues such as brain, kidney, liver and spinal cord.

It localises to the cytoplasm. Its function is as follows. Suppresses TNF- and CD40-induced NFKB1 activity at the level of the IKK complex, by inhibiting NFKBIA degradation induced by TNF. When associated with PYCARD, activates CASP1, leading to the secretion of mature pro-inflammatory cytokine IL1B. May be a component of the inflammasome, a protein complex which also includes PYCARD, CARD8 and CASP1 and whose function would be the activation of pro-inflammatory caspases. This chain is NACHT, LRR and PYD domains-containing protein 2 (NLRP2), found in Homo sapiens (Human).